The sequence spans 31 residues: Cycloviolacin-O25 (31 aa).

The segment at residues 1–31 (DIFCGETCAFIPCITHVPGTCSCKSKVCYFN) is a cross-link (cyclopeptide (Asp-Asn)). 3 disulfides stabilise this stretch: cysteine 4-cysteine 21, cysteine 8-cysteine 23, and cysteine 13-cysteine 28.

Post-translationally, this is a cyclic peptide. As to expression, expressed in roots and runners but not in leaves, petals and petioles (at protein level).

Functionally, probably participates in a plant defense mechanism. In Viola odorata (Sweet violet), this protein is Cycloviolacin-O25.